A 324-amino-acid polypeptide reads, in one-letter code: G patch domain-containing protein 4 (324 aa).

2 disordered regions span residues M1–L30 and L123–E324. Residues G11–A57 enclose the G-patch domain. Over residues F14–L30 the composition is skewed to basic and acidic residues. Over residues K131–S141 the composition is skewed to low complexity. The span at S186–R215 shows a compositional bias: basic and acidic residues. The span at H244–R253 shows a compositional bias: basic residues. Residues A254 to E270 are compositionally biased toward basic and acidic residues. Residues P296–F309 show a composition bias toward polar residues. The segment covering K312–E324 has biased composition (basic residues).

The protein is G patch domain-containing protein 4 (gpatch4) of Xenopus laevis (African clawed frog).